The primary structure comprises 249 residues: DNA repair protein RecO (249 aa).

It belongs to the RecO family.

Involved in DNA repair and RecF pathway recombination. This Rhodopseudomonas palustris (strain BisB5) protein is DNA repair protein RecO.